The primary structure comprises 180 residues: Large ribosomal subunit protein uL5 (180 aa).

The protein belongs to the universal ribosomal protein uL5 family. In terms of assembly, part of the 50S ribosomal subunit; part of the 5S rRNA/L5/L18/L25 subcomplex. Contacts the 5S rRNA and the P site tRNA. Forms a bridge to the 30S subunit in the 70S ribosome.

Functionally, this is one of the proteins that bind and probably mediate the attachment of the 5S RNA into the large ribosomal subunit, where it forms part of the central protuberance. In the 70S ribosome it contacts protein S13 of the 30S subunit (bridge B1b), connecting the 2 subunits; this bridge is implicated in subunit movement. Contacts the P site tRNA; the 5S rRNA and some of its associated proteins might help stabilize positioning of ribosome-bound tRNAs. The protein is Large ribosomal subunit protein uL5 of Leuconostoc mesenteroides subsp. mesenteroides (strain ATCC 8293 / DSM 20343 / BCRC 11652 / CCM 1803 / JCM 6124 / NCDO 523 / NBRC 100496 / NCIMB 8023 / NCTC 12954 / NRRL B-1118 / 37Y).